Consider the following 389-residue polypeptide: S-adenosylmethionine synthase (389 aa).

ATP is bound at residue histidine 17. Aspartate 19 provides a ligand contact to Mg(2+). Residue glutamate 45 participates in K(+) binding. Residues glutamate 58 and glutamine 101 each coordinate L-methionine. Positions 101–111 (QSPDISQGVTE) are flexible loop. Residues 168–170 (DSK), 234–235 (RF), aspartate 243, 249–250 (RK), alanine 266, and lysine 270 contribute to the ATP site. An L-methionine-binding site is contributed by aspartate 243. Residue lysine 274 participates in L-methionine binding.

This sequence belongs to the AdoMet synthase family. Homotetramer; dimer of dimers. Mg(2+) is required as a cofactor. It depends on K(+) as a cofactor.

Its subcellular location is the cytoplasm. The enzyme catalyses L-methionine + ATP + H2O = S-adenosyl-L-methionine + phosphate + diphosphate. It participates in amino-acid biosynthesis; S-adenosyl-L-methionine biosynthesis; S-adenosyl-L-methionine from L-methionine: step 1/1. Catalyzes the formation of S-adenosylmethionine (AdoMet) from methionine and ATP. The overall synthetic reaction is composed of two sequential steps, AdoMet formation and the subsequent tripolyphosphate hydrolysis which occurs prior to release of AdoMet from the enzyme. The protein is S-adenosylmethionine synthase of Geobacter metallireducens (strain ATCC 53774 / DSM 7210 / GS-15).